The chain runs to 508 residues: Drug efflux pump JefA (508 aa).

Helical transmembrane passes span 9–29 (VLAT…VNVA), 46–66 (WAVA…ALLG), 75–95 (FVFG…PVSL), 104–124 (IQGL…SHSF), 136–156 (NWMA…GLMV), 163–183 (SVFL…LVGV), 194–214 (LDWV…YTII), 222–242 (QSAG…WLFV), 265–285 (SVLI…MVIT), 297–317 (LHAG…SLLA), 328–348 (LPVL…AISM), 354–374 (VALV…TPLL), 399–419 (LGGI…LGAA), and 479–499 (GIKL…VLGW).

This sequence belongs to the major facilitator superfamily.

The protein localises to the cell inner membrane. In terms of biological role, involved in resistance to ethambutol and isoniazid. The chain is Drug efflux pump JefA from Mycobacterium tuberculosis (strain CDC 1551 / Oshkosh).